The following is a 250-amino-acid chain: F-box only protein 17 (250 aa).

The F-box domain maps to 15-62; sequence HMALAELPPELLLQVLSHVPPRALVTRCRPVCRAWRDLVDGPSVWLLQ. The 152-residue stretch at 99–250 folds into the FBA domain; it reads FCLLAPLGRN…GLLQGLSRLH (152 aa).

Part of a SCF (SKP1-cullin-F-box) protein ligase complex. Interacts with SKP1 and CUL1.

Substrate-recognition component of the SCF (SKP1-CUL1-F-box protein)-type E3 ubiquitin ligase complex. Able to recognize and bind denatured glycoproteins, which are modified with complex-type oligosaccharides. Also recognizes sulfated glycans. Does not bind high-mannose glycoproteins. The polypeptide is F-box only protein 17 (Fbxo17) (Rattus norvegicus (Rat)).